Reading from the N-terminus, the 431-residue chain is Histidinol dehydrogenase (431 aa).

Y129, Q191, and N214 together coordinate NAD(+). Residues S237, Q259, and H262 each contribute to the substrate site. 2 residues coordinate Zn(2+): Q259 and H262. Residues E327 and H328 each act as proton acceptor in the active site. Positions 328, 361, 415, and 420 each coordinate substrate. Residue D361 participates in Zn(2+) binding. Zn(2+) is bound at residue H420.

The protein belongs to the histidinol dehydrogenase family. Zn(2+) serves as cofactor.

It carries out the reaction L-histidinol + 2 NAD(+) + H2O = L-histidine + 2 NADH + 3 H(+). It functions in the pathway amino-acid biosynthesis; L-histidine biosynthesis; L-histidine from 5-phospho-alpha-D-ribose 1-diphosphate: step 9/9. Catalyzes the sequential NAD-dependent oxidations of L-histidinol to L-histidinaldehyde and then to L-histidine. The chain is Histidinol dehydrogenase (hisD) from Lactococcus lactis subsp. lactis (strain IL1403) (Streptococcus lactis).